The sequence spans 165 residues: Methyl-coenzyme M reductase II operon protein D (165 aa).

MCR is composed of three subunits: alpha, beta, and gamma. The function of protein D is not known.

In Methanothermus fervidus (strain ATCC 43054 / DSM 2088 / JCM 10308 / V24 S), this protein is Methyl-coenzyme M reductase II operon protein D (mrtD).